Here is a 503-residue protein sequence, read N- to C-terminus: uncharacterized protein (503 aa).

2 ABC transporter domains span residues 8 to 249 (VPVA…LGRD) and 261 to 499 (IVDQ…MSAI). An ATP-binding site is contributed by 43–50 (GKNGAGKS).

Belongs to the ABC transporter superfamily.

In terms of biological role, probably part of a binding-protein-dependent transport system YphDEF. Probably responsible for energy coupling to the transport system. This is an uncharacterized protein from Escherichia coli (strain K12).